We begin with the raw amino-acid sequence, 253 residues long: Isoprenyl transferase (253 aa).

Aspartate 30 is a catalytic residue. Aspartate 30 serves as a coordination point for Mg(2+). Residues 31 to 34, tryptophan 35, histidine 51, and 79 to 81 contribute to the substrate site; these read GNRR and STE. The active-site Proton acceptor is asparagine 82. Substrate contacts are provided by residues phenylalanine 83, arginine 85, arginine 202, and 208 to 210; that span reads RVS. Glutamate 221 contributes to the Mg(2+) binding site.

The protein belongs to the UPP synthase family. As to quaternary structure, homodimer. Mg(2+) serves as cofactor.

Functionally, catalyzes the condensation of isopentenyl diphosphate (IPP) with allylic pyrophosphates generating different type of terpenoids. The chain is Isoprenyl transferase from Chlamydia muridarum (strain MoPn / Nigg).